A 152-amino-acid polypeptide reads, in one-letter code: Large ribosomal subunit protein uL15 (152 aa).

Positions 1 to 13 (MLTLGNLSPQEGS) are enriched in polar residues. Positions 1-62 (MLTLGNLSPQ…GGQMPLQRRL (62 aa)) are disordered. Residues 31–40 (TAGRGHKGFK) are compositionally biased toward basic residues.

Belongs to the universal ribosomal protein uL15 family. As to quaternary structure, part of the 50S ribosomal subunit.

Functionally, binds to the 23S rRNA. This Desulfotalea psychrophila (strain LSv54 / DSM 12343) protein is Large ribosomal subunit protein uL15.